A 638-amino-acid polypeptide reads, in one-letter code: 1-deoxy-D-xylulose-5-phosphate synthase (638 aa).

Thiamine diphosphate-binding positions include His-77 and 118–120 (AHA). Residue Asp-149 coordinates Mg(2+). Residues 150 to 151 (GS), Asn-178, Tyr-287, and Glu-369 contribute to the thiamine diphosphate site. Asn-178 contacts Mg(2+).

The protein belongs to the transketolase family. DXPS subfamily. As to quaternary structure, homodimer. Mg(2+) serves as cofactor. The cofactor is thiamine diphosphate.

The catalysed reaction is D-glyceraldehyde 3-phosphate + pyruvate + H(+) = 1-deoxy-D-xylulose 5-phosphate + CO2. It functions in the pathway metabolic intermediate biosynthesis; 1-deoxy-D-xylulose 5-phosphate biosynthesis; 1-deoxy-D-xylulose 5-phosphate from D-glyceraldehyde 3-phosphate and pyruvate: step 1/1. Functionally, catalyzes the acyloin condensation reaction between C atoms 2 and 3 of pyruvate and glyceraldehyde 3-phosphate to yield 1-deoxy-D-xylulose-5-phosphate (DXP). The chain is 1-deoxy-D-xylulose-5-phosphate synthase from Phenylobacterium zucineum (strain HLK1).